The chain runs to 352 residues: Fe(3+) ions import ATP-binding protein FbpC (352 aa).

An ABC transporter domain is found at 5–239 (LHIGHLSKSF…PADLDAALFI (235 aa)). 37–44 (GASGCGKT) provides a ligand contact to ATP.

Belongs to the ABC transporter superfamily. Fe(3+) ion importer (TC 3.A.1.10) family. The complex is composed of two ATP-binding proteins (FbpC), two transmembrane proteins (FbpB) and a solute-binding protein (FbpA).

The protein resides in the cell inner membrane. It carries out the reaction Fe(3+)(out) + ATP + H2O = Fe(3+)(in) + ADP + phosphate + H(+). Part of the ABC transporter complex FbpABC involved in Fe(3+) ions import. Responsible for energy coupling to the transport system. This Neisseria gonorrhoeae (strain ATCC 700825 / FA 1090) protein is Fe(3+) ions import ATP-binding protein FbpC.